A 98-amino-acid chain; its full sequence is Small ribosomal subunit protein bS6c (98 aa).

Belongs to the bacterial ribosomal protein bS6 family.

Its subcellular location is the plastid. The protein localises to the chloroplast. Functionally, binds together with bS18 to 16S ribosomal RNA. The protein is Small ribosomal subunit protein bS6c of Phaeodactylum tricornutum (strain CCAP 1055/1).